Consider the following 484-residue polypeptide: Zinc metalloproteinase-disintegrin jerdonitin (484 aa).

Positions 1–20 are cleaved as a signal peptide; it reads MIQVLLVTICLAVFPYQGSS. The propeptide occupies 21 to 191; it reads IILESGNIDD…KLSQIMIPPE (171 aa). Gln192 is subject to Pyrrolidone carboxylic acid. Positions 194–392 constitute a Peptidase M12B domain; it reads RYIELVIVAD…FTSRCLYNEP (199 aa). Glu197 and Asp281 together coordinate Ca(2+). Disulfide bonds link Cys305–Cys387, Cys345–Cys369, and Cys347–Cys352. Residue His330 coordinates Zn(2+). Glu331 is a catalytic residue. Zn(2+) contacts are provided by His334 and His340. 7 residues coordinate Ca(2+): Cys387, Asn390, Val402, Asn405, Glu409, Glu412, and Asp415. Residues 400-484 enclose the Disintegrin domain; sequence PSVCGNYYME…AGCPRNPFHA (85 aa). 7 disulfide bridges follow: Cys403-Cys422, Cys414-Cys432, Cys416-Cys427, Cys426-Cys449, Cys440-Cys446, Cys445-Cys470, and Cys458-Cys477. The Cell attachment site signature appears at 462-464; that stretch reads RGD.

It belongs to the venom metalloproteinase (M12B) family. P-II subfamily. P-IIb sub-subfamily. In terms of assembly, monomer. Requires Zn(2+) as cofactor. In terms of processing, the N-terminus is blocked. In terms of tissue distribution, expressed by the venom gland.

It localises to the secreted. Fibrinogenolytic activity is completely inhibited by EDTA, but not by PMSF. Its function is as follows. Snake venom zinc metalloproteinase that inhibits ADP-induced human platelet aggregation (IC(50)=120 nM (native) and IC(50)=248 nM (recombinant)). May act by binding to the receptor GPIIb/GPIIIa (ITGA2B/ITGB3) on the platelet surface. Degrades the alpha-chain of fibrinogen completely and the beta-chain partially, leaving the gamma chain intact. Also inhibits the growth of several cell lines, including human liver cancer cells (Bel7402), human leukemia cells (K562) and human gastric carcinoma cells (BGC823). The polypeptide is Zinc metalloproteinase-disintegrin jerdonitin (Protobothrops jerdonii (Jerdon's pitviper)).